The chain runs to 1188 residues: Zinc finger SWIM domain-containing protein 5 (1188 aa).

Residues 1 to 10 (MAEGGEREEL) are compositionally biased toward basic and acidic residues. Disordered stretches follow at residues 1-46 (MAEG…GAGG) and 123-171 (AGAA…TGTA). Low complexity-rich tracts occupy residues 126–136 (AAGAAGASPVE) and 146–155 (AAPAGSAPGA). The segment covering 156 to 171 (AGAGSSPGLGAGTGTA) has biased composition (gly residues). The SWIM-type zinc-finger motif lies at 222-259 (YKVAISFDRCKITSVSCGCGNKDIFYCAHVVALSLYRI).

This is Zinc finger SWIM domain-containing protein 5 (Zswim5) from Mus musculus (Mouse).